The primary structure comprises 89 residues: Small ribosomal subunit protein uS15 (89 aa).

The protein belongs to the universal ribosomal protein uS15 family. Part of the 30S ribosomal subunit. Forms a bridge to the 50S subunit in the 70S ribosome, contacting the 23S rRNA.

One of the primary rRNA binding proteins, it binds directly to 16S rRNA where it helps nucleate assembly of the platform of the 30S subunit by binding and bridging several RNA helices of the 16S rRNA. Functionally, forms an intersubunit bridge (bridge B4) with the 23S rRNA of the 50S subunit in the ribosome. This Methylococcus capsulatus (strain ATCC 33009 / NCIMB 11132 / Bath) protein is Small ribosomal subunit protein uS15.